Consider the following 253-residue polypeptide: Ubiquinone biosynthesis O-methyltransferase (253 aa).

The S-adenosyl-L-methionine site is built by Arg47, Gly78, Asp99, and Met141.

This sequence belongs to the methyltransferase superfamily. UbiG/COQ3 family.

The catalysed reaction is a 3-demethylubiquinol + S-adenosyl-L-methionine = a ubiquinol + S-adenosyl-L-homocysteine + H(+). It catalyses the reaction a 3-(all-trans-polyprenyl)benzene-1,2-diol + S-adenosyl-L-methionine = a 2-methoxy-6-(all-trans-polyprenyl)phenol + S-adenosyl-L-homocysteine + H(+). The protein operates within cofactor biosynthesis; ubiquinone biosynthesis. Its function is as follows. O-methyltransferase that catalyzes the 2 O-methylation steps in the ubiquinone biosynthetic pathway. This chain is Ubiquinone biosynthesis O-methyltransferase, found in Rhodopseudomonas palustris (strain HaA2).